The primary structure comprises 364 residues: DNA replication and repair protein RecF (364 aa).

An ATP-binding site is contributed by 30 to 37 (GLNAQGKS).

Belongs to the RecF family.

It is found in the cytoplasm. The RecF protein is involved in DNA metabolism; it is required for DNA replication and normal SOS inducibility. RecF binds preferentially to single-stranded, linear DNA. It also seems to bind ATP. In Caldanaerobacter subterraneus subsp. tengcongensis (strain DSM 15242 / JCM 11007 / NBRC 100824 / MB4) (Thermoanaerobacter tengcongensis), this protein is DNA replication and repair protein RecF.